A 276-amino-acid polypeptide reads, in one-letter code: Proteasome subunit beta type-8 (276 aa).

Positions 1–33 (MALLDVCGAPRGQRPESALPVAGSGRRSDPGHY) are disordered. A propeptide spans 1 to 72 (MALLDVCGAP…RNVQIEMAHG (72 aa)) (removed in mature form). Phosphothreonine is present on D5. Residue T73 is the Nucleophile of the active site.

Belongs to the peptidase T1B family. The 26S proteasome consists of a 20S proteasome core and two 19S regulatory subunits. The 20S proteasome core is composed of 28 subunits that are arranged in four stacked rings, resulting in a barrel-shaped structure. The two end rings are each formed by seven alpha subunits, and the two central rings are each formed by seven beta subunits. The catalytic chamber with the active sites is on the inside of the barrel. Component of the immunoproteasome, where it displaces the equivalent housekeeping subunit PSMB5. Component of the spermatoproteasome, a form of the proteasome specifically found in testis. Directly interacts with POMP. Interacts with TAP1. In terms of assembly, (Microbial infection) Interacts with HIV-1 TAT protein. In terms of processing, autocleaved. The resulting N-terminal Thr residue of the mature subunit is responsible for the nucleophile proteolytic activity.

The protein resides in the cytoplasm. The protein localises to the nucleus. The catalysed reaction is Cleavage of peptide bonds with very broad specificity.. Its function is as follows. The proteasome is a multicatalytic proteinase complex which is characterized by its ability to cleave peptides with Arg, Phe, Tyr, Leu, and Glu adjacent to the leaving group at neutral or slightly basic pH. The proteasome has an ATP-dependent proteolytic activity. This subunit is involved in antigen processing to generate class I binding peptides. Replacement of PSMB5 by PSMB8 increases the capacity of the immunoproteasome to cleave model peptides after hydrophobic and basic residues. Involved in the generation of spliced peptides resulting from the ligation of two separate proteasomal cleavage products that are not contiguous in the parental protein. Acts as a major component of interferon gamma-induced sensitivity. Plays a key role in apoptosis via the degradation of the apoptotic inhibitor MCL1. May be involved in the inflammatory response pathway. In cancer cells, substitution of isoform 1 (E2) by isoform 2 (E1) results in immunoproteasome deficiency. Required for the differentiation of preadipocytes into adipocytes. The sequence is that of Proteasome subunit beta type-8 (PSMB8) from Homo sapiens (Human).